Consider the following 353-residue polypeptide: MSEPLKPRIDFAEPLKEEPTSAFKAQQTFSEAESRTFAPAAIDERPEDEGAAEAAVDAALRPKRSLWRKMVMGGLALFGASVVGQGVQWTMNAWQTQDWVALGGCAAGALIVGAGVGSVVTEWRRLWRLRQRAHERDEARELLHSHSVGKGRAFCEKLAQQAGIDQSHPALQRWYAAIHETQNDREIVGLYANLVQPVLDAQARREISRFAAESTLMIAVSPLALVDMAFIAWRNLRLINRIATLYGIELGYYSRLRLFRLVLLNIAFAGASELVREVGMDWMSQDLAARLSTRAAQGIGAGLLTARLGIKAMELCRPLPWIDNDKPRLGDFRRQLIGQLKETLQKSKSSPEK.

Residues 1-19 are compositionally biased toward basic and acidic residues; the sequence is MSEPLKPRIDFAEPLKEEP. The segment at 1 to 35 is disordered; it reads MSEPLKPRIDFAEPLKEEPTSAFKAQQTFSEAESR. The Periplasmic segment spans residues 1 to 69; the sequence is MSEPLKPRID…LRPKRSLWRK (69 aa). The helical transmembrane segment at 70–90 threads the bilayer; sequence MVMGGLALFGASVVGQGVQWT. The Cytoplasmic segment spans residues 91–99; the sequence is MNAWQTQDW. A helical membrane pass occupies residues 100–120; the sequence is VALGGCAAGALIVGAGVGSVV. At 121-212 the chain is on the periplasmic side; that stretch reads TEWRRLWRLR…ARREISRFAA (92 aa). A helical transmembrane segment spans residues 213-233; sequence ESTLMIAVSPLALVDMAFIAW. Over 234 to 353 the chain is Cytoplasmic; it reads RNLRLINRIA…LQKSKSSPEK (120 aa).

This sequence belongs to the UPF0283 family.

Its subcellular location is the cell inner membrane. In Salmonella typhimurium (strain LT2 / SGSC1412 / ATCC 700720), this protein is UPF0283 membrane protein YcjF (ycjF).